The primary structure comprises 239 residues: MSKAQTLSAADRAKLEGLIGHDFAEKERLDRALTHASARTEKGGNYERLEFLGDRVLGLCIAELLFRTFGTAGEGELSVRLNQLVSAETCAAVADELNLHLYIRTGADVKKLTGKRMMNVRADVVESLIAAIYLDGGLEVARRFILRYWQGRAVRADGAKRDAKTELQEWSHAKFGVTPNYRVDERSGPDHDPRFKVTVEVAGIKPETGVERSKRAAEQVAATKMLEREGIWQQSPAGN.

An RNase III domain is found at 12-137 (RAKLEGLIGH…LIAAIYLDGG (126 aa)). Glu-50 is a binding site for Mg(2+). Residue Asp-54 is part of the active site. 2 residues coordinate Mg(2+): Asp-123 and Glu-126. Residue Glu-126 is part of the active site. Residues 162–231 (DAKTELQEWS…ATKMLEREGI (70 aa)) enclose the DRBM domain.

Belongs to the ribonuclease III family. Homodimer. Mg(2+) serves as cofactor.

It is found in the cytoplasm. The catalysed reaction is Endonucleolytic cleavage to 5'-phosphomonoester.. In terms of biological role, digests double-stranded RNA. Involved in the processing of primary rRNA transcript to yield the immediate precursors to the large and small rRNAs (23S and 16S). Processes some mRNAs, and tRNAs when they are encoded in the rRNA operon. Processes pre-crRNA and tracrRNA of type II CRISPR loci if present in the organism. In Rhizobium leguminosarum bv. trifolii (strain WSM2304), this protein is Ribonuclease 3.